Here is a 239-residue protein sequence, read N- to C-terminus: MEFFNILQSSCNDVNLDFNDKKYNQFISYKNLIQEWNKKVNLTAIVEDEEIIKKHFIDCIKIFKASPIGEAKSLIDIGTGAGFPGIPIKILREDIKITLLDSLQKRINFLNIVIGDLKLKDIQCLHGRAEDYAQEAEHRQKYDVAVSRAVANLAVLSEFCIPFVKKGGYFIAMKGPSVEEEITVATKSIEVLGGKIEDIIKIDIEDTDLKHNLVIIKKVKETEKKYPRKPGIIKKDPLK.

S-adenosyl-L-methionine is bound by residues G78, F83, 129–130 (AE), and R148.

It belongs to the methyltransferase superfamily. RNA methyltransferase RsmG family.

Its subcellular location is the cytoplasm. In terms of biological role, specifically methylates the N7 position of a guanine in 16S rRNA. The sequence is that of Ribosomal RNA small subunit methyltransferase G from Clostridium botulinum (strain Loch Maree / Type A3).